The following is a 394-amino-acid chain: MAKKLFMFEKPLGMRDTLPFLYELKKQVRSVMAEEIERWGYEFIETPTLEYYETVGAASAIADHRLFKLLDQQGHTLVLRPDMTAPIARVAASRLYDDGNPLRLAYNANVFRAQQREGGRPAEFEQIGVELIGDGTVTADAEVISLMVALLKRTGLGRFSVAVGHIGYVNALFLEILGNEERASVLRRFLYEKNYVGYREHVKSWPLSSIDQKRLLDLLSLRGGTDVIEQAKTLVTSEKGRRAADELAVLMAVLRTYGVAEAVKLDMALVSHMSYYTGILFEVYAEQVGFPIGNGGRYDDLLAKFSRPAPATGFGLRVDRLIEAIGETDVRDDIECIVFSQERLAEAVELAEAKRAEGKRVVLQHIAGIRDIDAYSQRYRSIVYLLGRSGRDGQ.

Belongs to the class-II aminoacyl-tRNA synthetase family. HisZ subfamily. As to quaternary structure, heteromultimer composed of HisG and HisZ subunits.

The protein resides in the cytoplasm. It participates in amino-acid biosynthesis; L-histidine biosynthesis; L-histidine from 5-phospho-alpha-D-ribose 1-diphosphate: step 1/9. Its function is as follows. Required for the first step of histidine biosynthesis. May allow the feedback regulation of ATP phosphoribosyltransferase activity by histidine. In Geobacillus kaustophilus (strain HTA426), this protein is ATP phosphoribosyltransferase regulatory subunit.